A 190-amino-acid chain; its full sequence is Bifunctional D-Ala-D-Ala dipeptidase and D-Ala-D-Ala carboxypeptidase VanXYC (190 aa).

E66 contacts Mg(2+). A dipeptide is bound by residues Q67, A88, S93, H95, and D102. Residues H95 and D102 each coordinate Cu(2+). Residues H95 and D102 each coordinate Zn(2+). The active-site catalytic acid/base residue is E153. W155 and H156 together coordinate a dipeptide. H156 is a binding site for Cu(2+). Zn(2+) is bound at residue H156.

It belongs to the peptidase M15D family. In terms of assembly, homodimer.

It is found in the cytoplasm. The catalysed reaction is D-alanyl-D-alanine + H2O = 2 D-alanine. It carries out the reaction UDP-N-acetyl-alpha-D-muramoyl-L-alanyl-gamma-D-glutamyl-L-lysyl-D-alanyl-D-alanine + H2O = UDP-N-acetyl-alpha-D-muramoyl-L-alanyl-gamma-D-glutamyl-L-lysyl-D-alanine + D-alanine. Functionally, bifunctional enzyme, exhibiting dipeptidase and carboxypeptidase activities. Catalyzes hydrolysis of the D-alanyl-D-alanine dipeptide. Cleaves the C-terminal D-alanine residue of UDP-muramyl-pentapeptide[Ala] (UDP-MurNAc-L-Ala-D-Glu-L-Lys-D-Ala-D-Ala). Shows no activity against the pentapeptide with a C-terminal D-serine residue. Together with VanC/VanC1 and VanT, required for vancomycin resistance in E.gallinarum strain BM4174. This is Bifunctional D-Ala-D-Ala dipeptidase and D-Ala-D-Ala carboxypeptidase VanXYC from Enterococcus gallinarum.